Consider the following 788-residue polypeptide: Endonuclease MutS2 (788 aa).

334–341 provides a ligand contact to ATP; it reads GPNTGGKT. The 76-residue stretch at 713 to 788 folds into the Smr domain; the sequence is LDLRGQRYEE…GTGATIVYLQ (76 aa).

This sequence belongs to the DNA mismatch repair MutS family. MutS2 subfamily. In terms of assembly, homodimer. Binds to stalled ribosomes, contacting rRNA.

Its function is as follows. Endonuclease that is involved in the suppression of homologous recombination and thus may have a key role in the control of bacterial genetic diversity. Acts as a ribosome collision sensor, splitting the ribosome into its 2 subunits. Detects stalled/collided 70S ribosomes which it binds and splits by an ATP-hydrolysis driven conformational change. Acts upstream of the ribosome quality control system (RQC), a ribosome-associated complex that mediates the extraction of incompletely synthesized nascent chains from stalled ribosomes and their subsequent degradation. Probably generates substrates for RQC. In Lactobacillus johnsonii (strain CNCM I-12250 / La1 / NCC 533), this protein is Endonuclease MutS2.